The chain runs to 567 residues: NAC domain-containing protein 78 (567 aa).

An NAC domain is found at 9–159 (LAPGFRFHPT…AYVLCRIFQK (151 aa)). A DNA-binding region spans residues 108–165 (VGMKKTLVYHKGRAPRGERTNWVMHEYRLSDEDLKKAGVPQEAYVLCRIFQKSGTGPK). The disordered stretch occupies residues 393-436 (NQEALDQKPAPKELEKEVAGGKEAVEEKESGEGSSSKQDTDFKD). Residues 397–423 (LDQKPAPKELEKEVAGGKEAVEEKESG) show a composition bias toward basic and acidic residues. The chain crosses the membrane as a helical span at residues 544-564 (LVFMCLWVLLLSVSFKIVTMV).

In terms of tissue distribution, expressed in root meristem. Expressed in roots, rosette leaves, cauline leaves, shoot apex, stems and flowers.

It localises to the membrane. Its subcellular location is the nucleus. Transcriptional activator activated by proteolytic cleavage through regulated intramembrane proteolysis (RIP). Transcripition activator associated with the induction of genes related to flavonoid biosynthesis and required for the accumulation of anthocyanins in response to high light stress. Plays a role in the regulation of 20S and 26S proteasomes in response to high light stress. This Arabidopsis thaliana (Mouse-ear cress) protein is NAC domain-containing protein 78 (NAC078).